A 64-amino-acid chain; its full sequence is MSKLGVLLTICLLLFPLTALPLDGDQPADQRAERTQAEKHSLPDPRMGCCPFPCKTSCTTLCCG.

Positions 1–19 (MSKLGVLLTICLLLFPLTA) are cleaved as a signal peptide. A propeptide spanning residues 20–46 (LPLDGDQPADQRAERTQAEKHSLPDPR) is cleaved from the precursor. Cystine bridges form between cysteine 49/cysteine 58, cysteine 50/cysteine 62, and cysteine 54/cysteine 63. At cysteine 63 the chain carries Cysteine amide.

It belongs to the conotoxin M superfamily. As to expression, expressed by the venom duct.

Its subcellular location is the secreted. The polypeptide is Conotoxin Mr3.5 (Conus marmoreus (Marble cone)).